The sequence spans 154 residues: 6,7-dimethyl-8-ribityllumazine synthase (154 aa).

5-amino-6-(D-ribitylamino)uracil-binding positions include F15, 47 to 49, and 71 to 73; these read TFD and AVI. 76 to 77 lines the (2S)-2-hydroxy-3-oxobutyl phosphate pocket; sequence ET. H79 (proton donor) is an active-site residue. Position 104 (L104) interacts with 5-amino-6-(D-ribitylamino)uracil. R119 contacts (2S)-2-hydroxy-3-oxobutyl phosphate.

It belongs to the DMRL synthase family.

The enzyme catalyses (2S)-2-hydroxy-3-oxobutyl phosphate + 5-amino-6-(D-ribitylamino)uracil = 6,7-dimethyl-8-(1-D-ribityl)lumazine + phosphate + 2 H2O + H(+). It participates in cofactor biosynthesis; riboflavin biosynthesis; riboflavin from 2-hydroxy-3-oxobutyl phosphate and 5-amino-6-(D-ribitylamino)uracil: step 1/2. Functionally, catalyzes the formation of 6,7-dimethyl-8-ribityllumazine by condensation of 5-amino-6-(D-ribitylamino)uracil with 3,4-dihydroxy-2-butanone 4-phosphate. This is the penultimate step in the biosynthesis of riboflavin. This Saccharolobus solfataricus (strain ATCC 35092 / DSM 1617 / JCM 11322 / P2) (Sulfolobus solfataricus) protein is 6,7-dimethyl-8-ribityllumazine synthase.